The chain runs to 127 residues: Large ribosomal subunit protein bL17 (127 aa).

It belongs to the bacterial ribosomal protein bL17 family. In terms of assembly, part of the 50S ribosomal subunit. Contacts protein L32.

The chain is Large ribosomal subunit protein bL17 from Legionella pneumophila (strain Lens).